Reading from the N-terminus, the 97-residue chain is Translation initiation factor 1A (97 aa).

The region spanning 8 to 82 (IRVRLPDRKK…DRADIVWRYT (75 aa)) is the S1-like domain.

Belongs to the eIF-1A family.

In terms of biological role, seems to be required for maximal rate of protein biosynthesis. Enhances ribosome dissociation into subunits and stabilizes the binding of the initiator Met-tRNA(I) to 40 S ribosomal subunits. The chain is Translation initiation factor 1A (eIF1A) from Archaeoglobus fulgidus (strain ATCC 49558 / DSM 4304 / JCM 9628 / NBRC 100126 / VC-16).